The chain runs to 54 residues: MAAVTIKVKMESTAGTGYYKTTTKNPRNHPEKMELMMYDPKVRKHVLFKEKKVK.

The protein belongs to the bacterial ribosomal protein bL33 family.

The polypeptide is Large ribosomal subunit protein bL33 (Legionella pneumophila (strain Lens)).